Here is a 283-residue protein sequence, read N- to C-terminus: Thymidylate synthase (283 aa).

Residue Arg-22 coordinates dUMP. The Nucleophile role is filled by Cys-160. DUMP-binding positions include 180 to 183, Asn-191, and 221 to 223; these read RSCD and HIY. A (6R)-5,10-methylene-5,6,7,8-tetrahydrofolate-binding site is contributed by Asp-183. Residue Ser-282 coordinates (6R)-5,10-methylene-5,6,7,8-tetrahydrofolate.

It belongs to the thymidylate synthase family. Bacterial-type ThyA subfamily. As to quaternary structure, homodimer.

Its subcellular location is the cytoplasm. It carries out the reaction dUMP + (6R)-5,10-methylene-5,6,7,8-tetrahydrofolate = 7,8-dihydrofolate + dTMP. It functions in the pathway pyrimidine metabolism; dTTP biosynthesis. Functionally, catalyzes the reductive methylation of 2'-deoxyuridine-5'-monophosphate (dUMP) to 2'-deoxythymidine-5'-monophosphate (dTMP) while utilizing 5,10-methylenetetrahydrofolate (mTHF) as the methyl donor and reductant in the reaction, yielding dihydrofolate (DHF) as a by-product. This enzymatic reaction provides an intracellular de novo source of dTMP, an essential precursor for DNA biosynthesis. The sequence is that of Thymidylate synthase from Photobacterium profundum (strain SS9).